The chain runs to 225 residues: Suppressor of cytokine signaling 3 (225 aa).

The tract at residues 22-33 (LKTFSSKSEYQL) is kinase inhibitory region (KIR). The segment at 34–45 (VVNAVRKLQESG) is extended SH2 subdomain (ESS). The 97-residue stretch at 46-142 (FYWSAVTGGE…APSFPSPPTE (97 aa)) folds into the SH2 domain. Residues 131–142 (PGAPSFPSPPTE) show a composition bias toward pro residues. The tract at residues 131-162 (PGAPSFPSPPTEPSSEVPEQPSAQPLPGSPPR) is disordered. Positions 143-155 (PSSEVPEQPSAQP) are enriched in low complexity. Positions 177 to 224 (VLSRPLSSNVATLQHLCRKTVNGHLDSYEKVTQLPGPIREFLDQYDAP) constitute an SOCS box domain.

In terms of assembly, interacts with multiple activated proteins of the tyrosine kinase signaling pathway including IGF1 receptor, insulin receptor and JAK2. Binding to JAK2 is mediated through the KIR and SH2 domains to a phosphorylated tyrosine residue within the JAK2 JH1 domain. Binds specific activated tyrosine residues of the leptin, EPO, IL12, GSCF and gp130 receptors. Interaction with CSNK1E stabilizes SOCS3 protein. Component of the probable ECS(SOCS3) E3 ubiquitin-protein ligase complex which contains CUL5, RNF7/RBX2, Elongin BC complex and SOCS3. Interacts with CUL5, RNF7, ELOB and ELOC. Interacts with CUL2. Interacts with FGFR3. Interacts with INSR. Interacts with BCL10; this interaction may interfere with BCL10-binding with PELI2. Interacts with NOD2 (via CARD domain); the interaction promotes NOD2 degradation. Post-translationally, phosphorylated on tyrosine residues after stimulation by the cytokines, IL-2, EPO or IGF1. As to expression, widely expressed with high expression in heart, placenta, skeletal muscle, peripheral blood leukocytes, fetal and adult lung, and fetal liver and kidney. Lower levels in thymus.

Its pathway is protein modification; protein ubiquitination. Functionally, SOCS family proteins form part of a classical negative feedback system that regulates cytokine signal transduction. SOCS3 is involved in negative regulation of cytokines that signal through the JAK/STAT pathway. Inhibits cytokine signal transduction by binding to tyrosine kinase receptors including IL6ST/gp130, LIF, erythropoietin, insulin, IL12, GCSF and leptin receptors. Binding to JAK2 inhibits its kinase activity and regulates IL6 signaling. Suppresses fetal liver erythropoiesis. Regulates onset and maintenance of allergic responses mediated by T-helper type 2 cells. Probable substrate recognition component of a SCF-like ECS (Elongin BC-CUL2/5-SOCS-box protein) E3 ubiquitin-protein ligase complex which mediates the ubiquitination and subsequent proteasomal degradation of target proteins. In Homo sapiens (Human), this protein is Suppressor of cytokine signaling 3.